The following is a 473-amino-acid chain: GTPase Der (473 aa).

2 consecutive EngA-type G domains span residues 3 to 167 (FKVA…KGLE) and 203 to 378 (LRVA…TFWN). GTP is bound by residues 9–16 (GRPNVGKS), 56–60 (DTAGL), 119–122 (NKCE), 209–216 (GRPNVGKS), 256–260 (DTAGM), and 321–324 (NKWD). The KH-like domain occupies 379-463 (ARVPTARLNR…PIRLFMRKTH (85 aa)).

It belongs to the TRAFAC class TrmE-Era-EngA-EngB-Septin-like GTPase superfamily. EngA (Der) GTPase family. Associates with the 50S ribosomal subunit.

Functionally, GTPase that plays an essential role in the late steps of ribosome biogenesis. The polypeptide is GTPase Der (Parvibaculum lavamentivorans (strain DS-1 / DSM 13023 / NCIMB 13966)).